The following is a 1503-amino-acid chain: Protein Skeletor, isoforms D/E (1503 aa).

The signal sequence occupies residues 1–28 (MLAMKDKPWLLLFGLLAALSCLASFGDA). 2 consecutive DM13 domains span residues 34 to 143 (GTKI…VSIP) and 151 to 258 (PQKI…VRLP). In terms of domain architecture, DOMON spans 287–419 (LAFEVRWAVA…GAESVVWAIG (133 aa)). Disordered regions lie at residues 451-491 (PLPE…NVEP), 830-857 (NPNL…PTEI), 1086-1106 (IFNQ…SSVS), and 1426-1503 (EFRG…GRRA). Positions 830 to 840 (NPNLNPNHPNQ) are enriched in low complexity. A compositionally biased stretch (low complexity) spans 1452 to 1491 (SSSSGSTIYPYSSSTGASTSTVSSSASSPLSSSSLRPIST).

Interacts with Chro and Mgtor as part of a macromolecular complex forming the spindle matrix. Chro colocalizes with Skeletor (Skel) on the chromosomes at interphase and on spindle during metaphase.

Its subcellular location is the cytoplasm. It is found in the cytoskeleton. It localises to the spindle. The protein resides in the nucleus. The protein localises to the nucleolus. Its subcellular location is the chromosome. Provides structural support to stabilize and organize the microtubule spindle during mitosis (within embryonic somatic cells) and meiosis (within spermatocytes). The role in mitosis regulation depends on the Ran pathway. The protein is Protein Skeletor, isoforms D/E of Drosophila melanogaster (Fruit fly).